We begin with the raw amino-acid sequence, 789 residues long: Disintegrin and metalloproteinase domain-containing protein 7 (789 aa).

The first 23 residues, 1-23 (MLTTGIFWMTVLISHIQERGIVG), serve as a signal peptide directing secretion. The propeptide occupies 24–176 (VEGQELVHPK…NHSCVGLNFT (153 aa)). Residues 24-667 (VEGQELVHPK…EWGEALNLTS (644 aa)) lie on the Extracellular side of the membrane. Residues Asn-84, Asn-167, and Asn-174 are each glycosylated (N-linked (GlcNAc...) asparagine). A Peptidase M12B domain is found at 199–393 (KFIELFVVAD…QKPACILNNP (195 aa)). 4 cysteine pairs are disulfide-bonded: Cys-310–Cys-388, Cys-350–Cys-372, Cys-352–Cys-357, and Cys-459–Cys-479. Positions 401–487 (YPFCGNKKVD…ECPKDEFQAN (87 aa)) constitute a Disintegrin domain. 3 N-linked (GlcNAc...) asparagine glycosylation sites follow: Asn-583, Asn-628, and Asn-664. A helical membrane pass occupies residues 668-689 (VSIMVIVLVMVIIGVGLVILLI). Residues 690-789 (RYQKCIKMKQ…DTQSGCERLG (100 aa)) lie on the Cytoplasmic side of the membrane. The tract at residues 764–789 (RGIADPKQTDNVNLNLDTQSGCERLG) is disordered. Positions 772 to 789 (TDNVNLNLDTQSGCERLG) are enriched in polar residues.

As to quaternary structure, interacts with ITM2B in sperm; the interaction increases following capacitation. Interacts with HSPA5 and CANX. In terms of tissue distribution, expressed in both the head and tails of sperm (at protein level). Expressed in the epididymis (at protein level). Abundantly expressed in the apical region of the proximal caput epididymal epithelium, with decreasing expression in the mid and distal caput epididymal epithelium.

It is found in the membrane. In terms of biological role, required for normal male fertility via maintenance of epithelial cell morphology in the caput epididymis and subsequently correct epididymis lumen structure required for sperm development. Plays a role in sperm motility, flagella morphology and tyrosine phosphorylation during sperm capacitance. Plays a role in normal expression levels of HSPA5, ITM2B and ADAM2 in sperm both prior to and post-capacitation. This is a non catalytic metalloprotease-like protein. The polypeptide is Disintegrin and metalloproteinase domain-containing protein 7 (Mus musculus (Mouse)).